A 288-amino-acid polypeptide reads, in one-letter code: Energy-coupling factor transporter ATP-binding protein EcfA2 (288 aa).

An ABC transporter domain is found at 3 to 246 (IKLEQLGYCY…PDELVDLGLS (244 aa)). 40-47 (GHTGSGKS) lines the ATP pocket.

This sequence belongs to the ABC transporter superfamily. Energy-coupling factor EcfA family. Forms a stable energy-coupling factor (ECF) transporter complex composed of 2 membrane-embedded substrate-binding proteins (S component), 2 ATP-binding proteins (A component) and 2 transmembrane proteins (T component).

Its subcellular location is the cell membrane. ATP-binding (A) component of a common energy-coupling factor (ECF) ABC-transporter complex. Unlike classic ABC transporters this ECF transporter provides the energy necessary to transport a number of different substrates. The sequence is that of Energy-coupling factor transporter ATP-binding protein EcfA2 from Listeria monocytogenes serovar 1/2a (strain ATCC BAA-679 / EGD-e).